The chain runs to 393 residues: Formate-dependent phosphoribosylglycinamide formyltransferase (393 aa).

Residues glutamate 17–leucine 18 and glutamate 77 each bind N(1)-(5-phospho-beta-D-ribosyl)glycinamide. ATP contacts are provided by residues arginine 109, lysine 150, serine 155–glutamine 160, glutamate 190–leucine 193, and glutamate 198. One can recognise an ATP-grasp domain in the interval aspartate 114–leucine 304. Residues glutamate 263 and glutamate 275 each contribute to the Mg(2+) site. N(1)-(5-phospho-beta-D-ribosyl)glycinamide contacts are provided by residues aspartate 282, lysine 354, and arginine 361–arginine 362.

This sequence belongs to the PurK/PurT family. In terms of assembly, homodimer.

It carries out the reaction N(1)-(5-phospho-beta-D-ribosyl)glycinamide + formate + ATP = N(2)-formyl-N(1)-(5-phospho-beta-D-ribosyl)glycinamide + ADP + phosphate + H(+). The protein operates within purine metabolism; IMP biosynthesis via de novo pathway; N(2)-formyl-N(1)-(5-phospho-D-ribosyl)glycinamide from N(1)-(5-phospho-D-ribosyl)glycinamide (formate route): step 1/1. Involved in the de novo purine biosynthesis. Catalyzes the transfer of formate to 5-phospho-ribosyl-glycinamide (GAR), producing 5-phospho-ribosyl-N-formylglycinamide (FGAR). Formate is provided by PurU via hydrolysis of 10-formyl-tetrahydrofolate. This is Formate-dependent phosphoribosylglycinamide formyltransferase from Synechococcus sp. (strain RCC307).